Consider the following 336-residue polypeptide: MKKWFPALLFSLCVSGESSAWNNIVFYSLGNVNSYQGGNVVITQRPQFITSWRPGIATVTWNQCNGPEFADGSWAYYREYIAWVVFPKKVMTKNGYPLFIEVHNKGSWSEENTGDNDSYFFLKGYKWDERAFDAGNLCQKPGETTRLTEKFNDIIFKVALPADLPLGDYSVTIPYTSGIQRHFASYLGARFKIPYNVAKTLPRENEMLFLFKNIGGCRPSAQSLEIKHGDLSINSANNHYAAQTLSVSCDVPANIRFMLLRNTTPTYSHGKKFSVGLGHGWDSIVSVNGVDTGETTMRWYKAGTQNLTIGSRLYGESSKIQPGVLSGSATLLMILP.

The N-terminal stretch at 1–20 (MKKWFPALLFSLCVSGESSA) is a signal peptide. 2 cysteine pairs are disulfide-bonded: Cys-64–Cys-138 and Cys-217–Cys-249. D-galactose is bound by residues Glu-79 and 124–127 (GYKW).

Belongs to the adhesin PapG family.

It localises to the secreted. It is found in the fimbrium. Functionally, tip adhesin component of type P pili that plays a critical role in kidney infection through targeted interaction with the globoseries glycolipids containing the Gal-alpha(1-4)-Gal disaccharide present on uroepithelial cells. In turn, transcriptionally regulates host gene expression in kidney cells, leading to inflammatory pathway activation and renal tissue damage. Acts thereby as key determinant of invasive uropathogenic E.coli (UPEC), which cause pyelonephritis and urinary-source bacteremia. The polypeptide is Fimbrial adhesin PapGII (Escherichia coli O6:H1 (strain CFT073 / ATCC 700928 / UPEC)).